The primary structure comprises 96 residues: Co-chaperonin GroES (96 aa).

This sequence belongs to the GroES chaperonin family. In terms of assembly, heptamer of 7 subunits arranged in a ring. Interacts with the chaperonin GroEL.

It is found in the cytoplasm. Functionally, together with the chaperonin GroEL, plays an essential role in assisting protein folding. The GroEL-GroES system forms a nano-cage that allows encapsulation of the non-native substrate proteins and provides a physical environment optimized to promote and accelerate protein folding. GroES binds to the apical surface of the GroEL ring, thereby capping the opening of the GroEL channel. This chain is Co-chaperonin GroES, found in Acinetobacter baylyi (strain ATCC 33305 / BD413 / ADP1).